Here is a 359-residue protein sequence, read N- to C-terminus: Peptide chain release factor 1 (359 aa).

Position 235 is an N5-methylglutamine (Q235). Residues 284–311 (KAESERSASRKNQVGSGDRSERIRTYNF) are disordered.

Belongs to the prokaryotic/mitochondrial release factor family. Post-translationally, methylated by PrmC. Methylation increases the termination efficiency of RF1.

It localises to the cytoplasm. Its function is as follows. Peptide chain release factor 1 directs the termination of translation in response to the peptide chain termination codons UAG and UAA. This is Peptide chain release factor 1 from Bartonella quintana (strain Toulouse) (Rochalimaea quintana).